Here is a 184-residue protein sequence, read N- to C-terminus: Mediator of RNA polymerase II transcription subunit 11 (184 aa).

Over residues 142–152 the composition is skewed to polar residues; sequence ATTKQETNINN. Residues 142–184 are disordered; it reads ATTKQETNINNEDSEKEKQENITAIETKKESSENEDEDFDMIA. Basic and acidic residues predominate over residues 154–173; the sequence is DSEKEKQENITAIETKKESS. The span at 174-184 shows a compositional bias: acidic residues; the sequence is ENEDEDFDMIA.

This sequence belongs to the Mediator complex subunit 11 family. As to quaternary structure, component of the Mediator complex.

The protein resides in the nucleus. Its function is as follows. Component of the Mediator complex, a coactivator involved in the regulated transcription of nearly all RNA polymerase II-dependent genes. Mediator functions as a bridge to convey information from gene-specific regulatory proteins to the basal RNA polymerase II transcription machinery. Mediator is recruited to promoters by direct interactions with regulatory proteins and serves as a scaffold for the assembly of a functional pre-initiation complex with RNA polymerase II and the general transcription factors. This Debaryomyces hansenii (strain ATCC 36239 / CBS 767 / BCRC 21394 / JCM 1990 / NBRC 0083 / IGC 2968) (Yeast) protein is Mediator of RNA polymerase II transcription subunit 11 (MED11).